The chain runs to 337 residues: Ketol-acid reductoisomerase (NADP(+)) (337 aa).

One can recognise a KARI N-terminal Rossmann domain in the interval 1-180; that stretch reads MQVYYDKDAD…GGTKGGVIET (180 aa). Residues 24-27, R47, and S51 each bind NADP(+); that span reads YGSQ. H106 is an active-site residue. G132 provides a ligand contact to NADP(+). The region spanning 181–326 is the KARI C-terminal knotted domain; that stretch reads TFREETETDL…AQLRAMMPWI (146 aa). Residues D189, E193, E225, and E229 each contribute to the Mg(2+) site. S250 contacts substrate.

This sequence belongs to the ketol-acid reductoisomerase family. It depends on Mg(2+) as a cofactor.

It catalyses the reaction (2R)-2,3-dihydroxy-3-methylbutanoate + NADP(+) = (2S)-2-acetolactate + NADPH + H(+). The enzyme catalyses (2R,3R)-2,3-dihydroxy-3-methylpentanoate + NADP(+) = (S)-2-ethyl-2-hydroxy-3-oxobutanoate + NADPH + H(+). Its pathway is amino-acid biosynthesis; L-isoleucine biosynthesis; L-isoleucine from 2-oxobutanoate: step 2/4. The protein operates within amino-acid biosynthesis; L-valine biosynthesis; L-valine from pyruvate: step 2/4. Its function is as follows. Involved in the biosynthesis of branched-chain amino acids (BCAA). Catalyzes an alkyl-migration followed by a ketol-acid reduction of (S)-2-acetolactate (S2AL) to yield (R)-2,3-dihydroxy-isovalerate. In the isomerase reaction, S2AL is rearranged via a Mg-dependent methyl migration to produce 3-hydroxy-3-methyl-2-ketobutyrate (HMKB). In the reductase reaction, this 2-ketoacid undergoes a metal-dependent reduction by NADPH to yield (R)-2,3-dihydroxy-isovalerate. This Neisseria meningitidis serogroup A / serotype 4A (strain DSM 15465 / Z2491) protein is Ketol-acid reductoisomerase (NADP(+)).